Reading from the N-terminus, the 374-residue chain is 4-galactosyl-N-acetylglucosaminide 3-alpha-L-fucosyltransferase FUT5 (374 aa).

The Cytoplasmic segment spans residues 1–15; that stretch reads MDLLGAAKPQWPWRR. Residues 16 to 34 traverse the membrane as a helical; Signal-anchor for type II membrane protein segment; that stretch reads CLAGLLFQLLVAVCFFSYL. Topologically, residues 35-374 are lumenal; that stretch reads RVSRDDATGS…TVRSIAAWFN (340 aa). N60, N105, N167, and N198 each carry an N-linked (GlcNAc...) asparagine glycan.

The protein belongs to the glycosyltransferase 10 family.

It localises to the golgi apparatus. The protein resides in the golgi stack membrane. The enzyme catalyses a beta-D-galactosyl-(1-&gt;3)-N-acetyl-beta-D-glucosaminyl derivative + GDP-beta-L-fucose = a beta-D-galactosyl-(1-&gt;3)-[alpha-L-fucosyl-(1-&gt;4)]-N-acetyl-beta-D-glucosaminyl derivative + GDP + H(+). It catalyses the reaction an N-acetyl-alpha-neuraminyl-(2-&gt;3)-beta-D-galactosyl-(1-&gt;4)-N-acetyl-beta-D-glucosaminyl derivative + GDP-beta-L-fucose = an alpha-Neu5Ac-(2-&gt;3)-beta-D-Gal-(1-&gt;4)-[alpha-L-Fuc-(1-&gt;3)]-beta-D-GlcNAc derivative + GDP + H(+). It carries out the reaction an alpha-Neu5Ac-(2-&gt;3)-beta-D-Gal-(1-&gt;4)-beta-D-GlcNAc-(1-&gt;3)-beta-D-Gal-(1-&gt;4)-[alpha-L-Fuc-(1-&gt;3)]-beta-D-GlcNAc derivative + GDP-beta-L-fucose = an alpha-Neu5Ac-(2-&gt;3)-beta-D-Gal-(1-&gt;4)-[alpha-L-Fuc-(1-&gt;3)]-beta-D-GlcNAc-(1-&gt;3)-beta-D-Gal-(1-&gt;4)-[alpha-L-Fuc-(1-&gt;3)]-beta-D-GlcNAc derivative + GDP + H(+). The catalysed reaction is a beta-D-galactosyl-(1-&gt;4)-N-acetyl-beta-D-glucosaminyl derivative + GDP-beta-L-fucose = a beta-D-galactosyl-(1-&gt;4)-[alpha-L-fucosyl-(1-&gt;3)]-N-acetyl-beta-D-glucosaminyl derivative + GDP + H(+). The enzyme catalyses a neolactoside nLc4Cer + GDP-beta-L-fucose = a neolactoside III(3)-alpha-Fuc-nLc4Cer + GDP + H(+). It catalyses the reaction a neolactoside nLc6Cer + GDP-beta-L-fucose = beta-D-galactosyl-(1-&gt;4)-N-acetyl-beta-D-glucosaminyl-(1-&gt;3)-beta-D-galactosyl-(1-&gt;4)-[alpha-L-fucosyl-(1-&gt;3)]-N-acetyl-beta-D-glucosaminyl-(1-&gt;3)-beta-D-galactosyl-(1-&gt;4)-beta-D-glucosyl-(1&lt;-&gt;1')-ceramide + GDP + H(+). It carries out the reaction a neolactoside nLc6Cer(d18:1(4E)) + GDP-beta-L-fucose = a neolactoside III(3)-alpha-Fuc-nLc6Cer(d18:1(4E)) + GDP + H(+). The catalysed reaction is a neolactoside nLc4Cer(d18:1(4E)) + GDP-beta-L-fucose = a neolactoside III(3)-alpha-Fuc-nLc4Cer(d18:1(4E)) + GDP + H(+). The enzyme catalyses a neolactoside VI(3)-alpha-NeuNAc-nLc6Cer + GDP-beta-L-fucose = a neolactoside VI(3)-alpha-NeuAc,III(3)-alphaFuc-nLc6Cer + GDP + H(+). It catalyses the reaction beta-D-galactosyl-(1-&gt;4)-N-acetyl-D-glucosamine + GDP-beta-L-fucose = beta-D-galactosyl-(1-&gt;4)-[alpha-L-fucosyl-(1-&gt;3)]-N-acetyl-D-glucosamine + GDP + H(+). It carries out the reaction N-acetyl-alpha-neuraminosyl-(2-&gt;3)-beta-D-galactosyl-(1-&gt;4)-N-acetyl-beta-D-glucosamine + GDP-beta-L-fucose = N-acetyl-alpha-neuraminosyl-(2-&gt;3)-beta-D-galactosyl-(1-&gt;4)-[alpha-L-fucosyl-(1-&gt;3)]-N-acetyl-beta-D-glucosamine + GDP + H(+). The catalysed reaction is alpha-L-Fuc-(1-&gt;2)-beta-D-Gal-(1-&gt;4)-D-GlcNAc + GDP-beta-L-fucose = alpha-L-Fuc-(1-&gt;2)-beta-D-Gal-(1-&gt;4)-[alpha-L-Fuc-(1-&gt;3)]-D-GlcNAc + GDP + H(+). The enzyme catalyses an alpha-Neu5Ac-(2-&gt;3)-beta-D-Gal-(1-&gt;3)-D-GlcNAc derivative + GDP-beta-L-fucose = an alpha-Neu5Ac-(2-&gt;3)-beta-D-Gal-(1-&gt;3)-[alpha-L-Fuc-(1-&gt;4)]-beta-D-GlcNAc derivative + GDP + H(+). It participates in protein modification; protein glycosylation. In terms of biological role, catalyzes preferentially the transfer of L-fucose, from a guanosine diphosphate-beta-L-fucose, to the N-acetyl-beta-D-glucosamine (GlcNAc) of an N-acetyllactosamine unit (type 2 chain) of an oligosaccharide, or a glycoprotein- and a glycolipid-linked N-acetyllactosamine unit via an alpha (1,3) linkage and participates in the surface expression of VIM-2, Lewis X/SSEA-1 and sialyl Lewis X antigens. Preferentially transfers fucose to the GlcNAc of an internal N-acetyllactosamine unit of a poly-N-acetyllactosamine chain acceptor substrate. Also catalyzes to a lesser extend the transfer of L-fucose to the GlcNAc of a type 1 (beta-D-galactosyl-(1-&gt;3)-N-acetyl-beta-D-glucosaminyl) or H-type 1 (alpha-L-Fuc-(1-&gt;2)-beta-D-Gal-(1-&gt;3)-D-GlcNAc) chain oligosaccharide via an alpha (1,4) linkage. Preferentially catalyzes sialylated type 2 oligosaccharide acceptors over neutral type 2 or H type 2 (alpha-L-Fuc-(1-&gt;2)-beta-D-Gal-(1-&gt;4)-D-GlcNAc) oligosaccharide acceptors. Lactose-based structures are also acceptor substrates. This chain is 4-galactosyl-N-acetylglucosaminide 3-alpha-L-fucosyltransferase FUT5, found in Hylobates lar (Lar gibbon).